A 139-amino-acid polypeptide reads, in one-letter code: Large ribosomal subunit protein uL16 (139 aa).

Positions 1–17 (MLMPKRVKYRKTQRGRM) are enriched in basic residues. Residues 1–24 (MLMPKRVKYRKTQRGRMKGNSGRG) are disordered.

This sequence belongs to the universal ribosomal protein uL16 family. Part of the 50S ribosomal subunit.

In terms of biological role, binds 23S rRNA and is also seen to make contacts with the A and possibly P site tRNAs. This is Large ribosomal subunit protein uL16 from Pelodictyon phaeoclathratiforme (strain DSM 5477 / BU-1).